The primary structure comprises 301 residues: ADP,ATP carrier protein 1 (301 aa).

3 Solcar repeats span residues 8-100 (YGFA…YKQV), 113-203 (RYFL…AKGM), and 210-299 (TSIF…VKAL). The next 5 membrane-spanning stretches (helical) occupy residues 10 to 39 (FAKD…LLLQ), 77 to 101 (LANV…KQVF), 112 to 132 (WRYF…SLCF), 181 to 201 (VSVQ…DTAK), and 213 to 233 (FVSW…SYPF). Residues R82 and K94 each contribute to the ADP site. R237 is an ADP binding site. The interval 237–242 (RRRMMM) is important for transport activity. Positions 237-242 (RRRMMM) match the Nucleotide carrier signature motif motif. Residues 276 to 293 (AFSNVLRGTGGALVLVFY) traverse the membrane as a helical segment.

The protein belongs to the mitochondrial carrier (TC 2.A.29) family. As to quaternary structure, monomer.

The protein resides in the mitochondrion inner membrane. It carries out the reaction ADP(in) + ATP(out) = ADP(out) + ATP(in). With respect to regulation, the matrix-open state (m-state) is inhibited by the membrane-permeable bongkrekic acid (BKA). The cytoplasmic-open state (c-state) is inhibited by the membrane-impermeable toxic inhibitor carboxyatractyloside (CATR). ADP:ATP antiporter that mediates import of ADP into the mitochondrial matrix for ATP synthesis, and export of ATP out to fuel the cell. Cycles between the cytoplasmic-open state (c-state) and the matrix-open state (m-state): operates by the alternating access mechanism with a single substrate-binding site intermittently exposed to either the cytosolic (c-state) or matrix (m-state) side of the inner mitochondrial membrane. This Anopheles gambiae (African malaria mosquito) protein is ADP,ATP carrier protein 1.